We begin with the raw amino-acid sequence, 318 residues long: COP9 signalosome complex subunit 6 (318 aa).

Positions 32–165 constitute an MPN domain; sequence VALHPLVILN…VSVYESVIDI (134 aa).

It belongs to the peptidase M67A family. CSN6 subfamily. As to quaternary structure, component of the CSN complex, probably composed of cops1, cops2, cops3, cops4, cops5, cops6, cops7, cops8 and cops9.

The protein localises to the cytoplasm. Its subcellular location is the nucleus. Its function is as follows. Component of the COP9 signalosome complex (CSN), a complex involved in various cellular and developmental processes. The CSN complex is an essential regulator of the ubiquitin (Ubl) conjugation pathway by mediating the deneddylation of the cullin subunits of E3 ligase complexes, leading to modify the Ubl ligase activity. In Xenopus laevis (African clawed frog), this protein is COP9 signalosome complex subunit 6 (cops6).